We begin with the raw amino-acid sequence, 292 residues long: Probable 2-(5''-triphosphoribosyl)-3'-dephosphocoenzyme-A synthase (292 aa).

Belongs to the CitG/MdcB family.

The catalysed reaction is 3'-dephospho-CoA + ATP = 2'-(5''-triphospho-alpha-D-ribosyl)-3'-dephospho-CoA + adenine. This Shigella boydii serotype 18 (strain CDC 3083-94 / BS512) protein is Probable 2-(5''-triphosphoribosyl)-3'-dephosphocoenzyme-A synthase.